The following is a 333-amino-acid chain: MRILAIETSCDETAAAIVEDGRRALADVISTQIDIHRRWGGVVPELASRNHVVQVMPVVDEALSRAGVGPDGLDAIAVTSGPGLVGALLVGVQAAKALALAWQKPLVRVNHLEGHLVAAFLSETAPAFPYLGLVVSGGHTSLYAAHGFGDYRLLGQTRDDAAGEAFDKGAKLLGLPYPGGVAIDRLAKEGDARAIRFPKAIVKGADLDFSFSGLKTALLHHVKKHGLPEGKGLADLCASYQEAIVRALVEKAFRAARRLQYDRLVLSGGVAANSRLRGAVAERAREYEGMEVFLPAPRLCTDNAAMIAVAGTHAFLRGERAGADLNADPAWRL.

Residues histidine 111 and histidine 115 each coordinate Fe cation. Substrate-binding positions include 134–138, aspartate 167, glycine 180, aspartate 184, and asparagine 273; that span reads VVSGG. Aspartate 302 lines the Fe cation pocket.

The protein belongs to the KAE1 / TsaD family. Requires Fe(2+) as cofactor.

It is found in the cytoplasm. The enzyme catalyses L-threonylcarbamoyladenylate + adenosine(37) in tRNA = N(6)-L-threonylcarbamoyladenosine(37) in tRNA + AMP + H(+). Required for the formation of a threonylcarbamoyl group on adenosine at position 37 (t(6)A37) in tRNAs that read codons beginning with adenine. Is involved in the transfer of the threonylcarbamoyl moiety of threonylcarbamoyl-AMP (TC-AMP) to the N6 group of A37, together with TsaE and TsaB. TsaD likely plays a direct catalytic role in this reaction. The polypeptide is tRNA N6-adenosine threonylcarbamoyltransferase (Anaeromyxobacter sp. (strain Fw109-5)).